Consider the following 90-residue polypeptide: Sec-independent protein translocase protein TatA (90 aa).

A helical transmembrane segment spans residues Gly2 to Phe22. 2 stretches are compositionally biased toward basic and acidic residues: residues Leu45–Glu68 and Ala76–Lys90. A disordered region spans residues Leu45–Lys90.

This sequence belongs to the TatA/E family. In terms of assembly, the Tat system comprises two distinct complexes: a TatABC complex, containing multiple copies of TatA, TatB and TatC subunits, and a separate TatA complex, containing only TatA subunits. Substrates initially bind to the TatABC complex, which probably triggers association of the separate TatA complex to form the active translocon.

It localises to the cell inner membrane. Functionally, part of the twin-arginine translocation (Tat) system that transports large folded proteins containing a characteristic twin-arginine motif in their signal peptide across membranes. TatA could form the protein-conducting channel of the Tat system. The protein is Sec-independent protein translocase protein TatA of Nitrosococcus oceani (strain ATCC 19707 / BCRC 17464 / JCM 30415 / NCIMB 11848 / C-107).